The chain runs to 92 residues: Small ribosomal subunit protein uS19 (92 aa).

This sequence belongs to the universal ribosomal protein uS19 family.

In terms of biological role, protein S19 forms a complex with S13 that binds strongly to the 16S ribosomal RNA. This Francisella philomiragia subsp. philomiragia (strain ATCC 25017 / CCUG 19701 / FSC 153 / O#319-036) protein is Small ribosomal subunit protein uS19.